The following is a 395-amino-acid chain: Elongation factor Tu (395 aa).

A tr-type G domain is found at 10–204; the sequence is KPHVNIGTIG…EVDAYIPTPE (195 aa). The interval 19-26 is G1; the sequence is GHVDHGKT. 19 to 26 serves as a coordination point for GTP; the sequence is GHVDHGKT. Residue T26 participates in Mg(2+) binding. Residues 60-64 are G2; that stretch reads GITIS. Residues 81–84 are G3; sequence DCPG. GTP is bound by residues 81 to 85 and 136 to 139; these read DCPGH and NKCD. Residues 136 to 139 form a G4 region; it reads NKCD. Residues 174 to 176 are G5; the sequence is SAL.

Belongs to the TRAFAC class translation factor GTPase superfamily. Classic translation factor GTPase family. EF-Tu/EF-1A subfamily. As to quaternary structure, monomer.

It is found in the cytoplasm. The enzyme catalyses GTP + H2O = GDP + phosphate + H(+). GTP hydrolase that promotes the GTP-dependent binding of aminoacyl-tRNA to the A-site of ribosomes during protein biosynthesis. The protein is Elongation factor Tu of Bacillus anthracis (strain A0248).